Here is a 373-residue protein sequence, read N- to C-terminus: RNA 3'-terminal phosphate cyclase-like protein (373 aa).

This sequence belongs to the RNA 3'-terminal cyclase family. Type 2 subfamily. As to quaternary structure, part of the small subunit (SSU) processome, composed of more than 70 proteins and the RNA chaperone small nucleolar RNA (snoRNA) U3. Interacts with BMS1.

The protein localises to the nucleus. Its subcellular location is the nucleolus. Functionally, as part of the small subunit (SSU) processome, it plays a role in 40S-ribosomal-subunit biogenesis in the early pre-rRNA processing steps at sites A0, A1 and A2 that are required for proper maturation of the 18S RNA. Activates BMS1 by promoting GDP/GTP exchange. Does not have cyclase activity. The sequence is that of RNA 3'-terminal phosphate cyclase-like protein from Homo sapiens (Human).